We begin with the raw amino-acid sequence, 338 residues long: Envelope glycoprotein K (338 aa).

Positions 1-30 (MLAVRSLQHLSTVVLITAYGLVLVWYTVFG) are cleaved as a signal peptide. The Extracellular portion of the chain corresponds to 31 to 121 (ASPLHRCIYA…VNCLETLWYT (91 aa)). Positions 31 to 121 (ASPLHRCIYA…VNCLETLWYT (91 aa)) are involved in fusion. N-linked (GlcNAc...) asparagine; by host glycans are attached at residues Asn-48 and Asn-58. The helical transmembrane segment at 122–140 (RVRLVVVGWFLYLAFVALH) threads the bilayer. Over 141-212 (QRRCMFGVVS…DPVTFLYHRP (72 aa)) the chain is Cytoplasmic. The chain crosses the membrane as a helical span at residues 213-233 (AIGVIVGCELIVRFVAVGLIV). The Extracellular segment spans residues 234-243 (GTAFISRGAC). Residues 244-264 (AITYPLFLTITTWCFVSTIGL) traverse the membrane as a helical segment. Topologically, residues 265–301 (TELYCILRRGPAPKNADKAAAPGRSKGLSGVCGRCCS) are cytoplasmic. The tract at residues 265–301 (TELYCILRRGPAPKNADKAAAPGRSKGLSGVCGRCCS) is interaction with UL20. A helical membrane pass occupies residues 302 to 322 (IILSGIAMRLCYIAVVAGVVL). The Extracellular segment spans residues 323-338 (VALHYEQEIQRRLFDV).

The protein belongs to the alphaherpesvirinae glycoprotein K family. Interacts (via UL20 interaction region) with protein UL20 (via N-terminus); this interaction probably plays a role in the coordinate transport of protein UL20 and gK to the trans-Golgi network (TGN), and is required for the cell surface expression of gK. Post-translationally, N-glycosylated.

Its subcellular location is the host cell membrane. It localises to the host endosome membrane. It is found in the host Golgi apparatus membrane. Glycoprotein that probably modulates membrane fusion events during secondary envelopment of cytoplasmic capsids that bud into specific trans-Golgi network (TGN)-derived membranes. Also plays a role, together with gB, in virus-induced cell-to-cell fusion (syncytia formation). Seems to block fusion of virions with infected-cell membranes. The sequence is that of Envelope glycoprotein K (gK) from Homo sapiens (Human).